An 874-amino-acid polypeptide reads, in one-letter code: Protein translocase subunit SecA (874 aa).

Residues Gln85, 103–107 (GEGKT), and Asp492 contribute to the ATP site. A compositionally biased stretch (basic and acidic residues) spans 839 to 854 (EEGPKKPYRREQKIGR). Residues 839–864 (EEGPKKPYRREQKIGRNDPCPCGSGK) are disordered. Residues Cys858, Cys860, Cys869, and Cys870 each coordinate Zn(2+).

The protein belongs to the SecA family. As to quaternary structure, monomer and homodimer. Part of the essential Sec protein translocation apparatus which comprises SecA, SecYEG and auxiliary proteins SecDF. Other proteins may also be involved. The cofactor is Zn(2+).

Its subcellular location is the cell membrane. It is found in the cytoplasm. The catalysed reaction is ATP + H2O + cellular proteinSide 1 = ADP + phosphate + cellular proteinSide 2.. In terms of biological role, part of the Sec protein translocase complex. Interacts with the SecYEG preprotein conducting channel. Has a central role in coupling the hydrolysis of ATP to the transfer of proteins into and across the cell membrane, serving as an ATP-driven molecular motor driving the stepwise translocation of polypeptide chains across the membrane. In Carboxydothermus hydrogenoformans (strain ATCC BAA-161 / DSM 6008 / Z-2901), this protein is Protein translocase subunit SecA.